Consider the following 316-residue polypeptide: MVELDYLFLGSVGFLTIALMLIILRIIKLYFDEKQARKRKEALSAMAADEHAARNERDVVVVGGRRVQTARRRVRHNVDDGNNDDMGFVRNAIDQNGDISEQEDLPSADLARDEHFGKKKLAKLQAKEERRKQREAELLEREERKKLEQEKEKRLQKEREKQMEQEEEERKRKCREREEREKREEEEYKKLRETFAVDEEGFDQTDGEESQNLLRDFVEYVRKTKVVNIDELGAHFNLRTEDAVDRLNFLVGNGTLTGIMDDRGKFIHITSEELQAVAKFINQRGRVSKAELIEYSNKLIALESRCVEHVSELTAA.

The Lumenal portion of the chain corresponds to 1–3 (MVE). Residues 4–24 (LDYLFLGSVGFLTIALMLIIL) form a helical membrane-spanning segment. Residues 25-316 (RIIKLYFDEK…VEHVSELTAA (292 aa)) lie on the Cytoplasmic side of the membrane. Positions 147–187 (LEQEKEKRLQKEREKQMEQEEEERKRKCREREEREKREEEE) are disordered.

Belongs to the DDRGK1 family.

It localises to the endoplasmic reticulum membrane. In terms of biological role, substrate adapter for ufmylation, the covalent attachment of the ubiquitin-like modifier UFM1 to substrate proteins. In Brugia malayi (Filarial nematode worm), this protein is DDRGK domain-containing protein 1.